Here is a 762-residue protein sequence, read N- to C-terminus: Probable inorganic carbon transporter subunit DabA (762 aa).

Residues Cys279, Asp281, His461, and Cys476 each coordinate Zn(2+).

This sequence belongs to the inorganic carbon transporter (TC 9.A.2) DabA family. In terms of assembly, forms a complex with DabB. It depends on Zn(2+) as a cofactor.

The protein localises to the cell inner membrane. Part of an energy-coupled inorganic carbon pump. This Legionella pneumophila subsp. pneumophila (strain Philadelphia 1 / ATCC 33152 / DSM 7513) protein is Probable inorganic carbon transporter subunit DabA.